Here is a 198-residue protein sequence, read N- to C-terminus: dTTP/UTP pyrophosphatase (198 aa).

Aspartate 72 serves as the catalytic Proton acceptor.

This sequence belongs to the Maf family. YhdE subfamily. A divalent metal cation is required as a cofactor.

It is found in the cytoplasm. It carries out the reaction dTTP + H2O = dTMP + diphosphate + H(+). The enzyme catalyses UTP + H2O = UMP + diphosphate + H(+). Nucleoside triphosphate pyrophosphatase that hydrolyzes dTTP and UTP. May have a dual role in cell division arrest and in preventing the incorporation of modified nucleotides into cellular nucleic acids. The polypeptide is dTTP/UTP pyrophosphatase (Pseudomonas fluorescens (strain Pf0-1)).